Reading from the N-terminus, the 512-residue chain is Glutathione-binding protein GsiB (512 aa).

An N-terminal signal peptide occupies residues 1 to 26 (MARAVHRSGLVALGIATALMASCAFA).

This sequence belongs to the bacterial solute-binding protein 5 family. As to quaternary structure, the complex is composed of two ATP-binding proteins (GsiA), two transmembrane proteins (GsiC and GsiD) and a solute-binding protein (GsiB).

The protein resides in the periplasm. Part of the ABC transporter complex GsiABCD involved in glutathione import. Binds glutathione. The chain is Glutathione-binding protein GsiB from Escherichia coli O6:K15:H31 (strain 536 / UPEC).